We begin with the raw amino-acid sequence, 188 residues long: MPDPTQNPNVTPELEQHAAPEAAAEAAPESSADVMPSLEETLRQAELKAAEHYDAWLRAKAEGENIRRRAQEDIAKATKFAAEKFASAMVPVKDSLEAALAVENQTVEKLREGVELTLKQLVSAFEGAGLAEENPLGQKFDPNKHQAISAIEAEGEPNTVINVLQKGYLLHERVVRPALVVVSKAKAQ.

Over residues 1–10 the composition is skewed to polar residues; the sequence is MPDPTQNPNV. The interval 1 to 35 is disordered; it reads MPDPTQNPNVTPELEQHAAPEAAAEAAPESSADVM. A compositionally biased stretch (low complexity) spans 19–32; sequence APEAAAEAAPESSA.

It belongs to the GrpE family. In terms of assembly, homodimer.

It is found in the cytoplasm. Its function is as follows. Participates actively in the response to hyperosmotic and heat shock by preventing the aggregation of stress-denatured proteins, in association with DnaK and GrpE. It is the nucleotide exchange factor for DnaK and may function as a thermosensor. Unfolded proteins bind initially to DnaJ; upon interaction with the DnaJ-bound protein, DnaK hydrolyzes its bound ATP, resulting in the formation of a stable complex. GrpE releases ADP from DnaK; ATP binding to DnaK triggers the release of the substrate protein, thus completing the reaction cycle. Several rounds of ATP-dependent interactions between DnaJ, DnaK and GrpE are required for fully efficient folding. This Azoarcus sp. (strain BH72) protein is Protein GrpE.